The chain runs to 678 residues: UvrABC system protein B (678 aa).

Positions 31–417 (EGLENGLAHQ…KSGGEIIDQV (387 aa)) constitute a Helicase ATP-binding domain. 44 to 51 (GVTGSGKT) lines the ATP pocket. A Beta-hairpin motif is present at residues 97–120 (YYDYYQPEAYVPSSDTFIEKDASI). The Helicase C-terminal domain occupies 436–589 (QVDDLLSEAR…QMKYNEARGI (154 aa)). The UVR domain maps to 638-673 (QQQIKKLEQQMYKYAQDLEFEKAAAVRDQLQQLREH).

This sequence belongs to the UvrB family. As to quaternary structure, forms a heterotetramer with UvrA during the search for lesions. Interacts with UvrC in an incision complex.

Its subcellular location is the cytoplasm. The UvrABC repair system catalyzes the recognition and processing of DNA lesions. A damage recognition complex composed of 2 UvrA and 2 UvrB subunits scans DNA for abnormalities. Upon binding of the UvrA(2)B(2) complex to a putative damaged site, the DNA wraps around one UvrB monomer. DNA wrap is dependent on ATP binding by UvrB and probably causes local melting of the DNA helix, facilitating insertion of UvrB beta-hairpin between the DNA strands. Then UvrB probes one DNA strand for the presence of a lesion. If a lesion is found the UvrA subunits dissociate and the UvrB-DNA preincision complex is formed. This complex is subsequently bound by UvrC and the second UvrB is released. If no lesion is found, the DNA wraps around the other UvrB subunit that will check the other stand for damage. This Pasteurella multocida (strain Pm70) protein is UvrABC system protein B.